Consider the following 120-residue polypeptide: U13-lycotoxin-Ls1c (120 aa).

The N-terminal stretch at 1–16 is a signal peptide; sequence MKILFVLISILYAVYC. Positions 17-54 are excised as a propeptide; that stretch reads FSSEEDVDSAYLANELEPVEDINSEQYAALEPKEEQER. 3 cysteine pairs are disulfide-bonded: cysteine 56-cysteine 70, cysteine 69-cysteine 87, and cysteine 78-cysteine 85. The 40-residue stretch at 56–95 folds into the Agouti domain; it reads CADMGQDRKDDCDCCLNIATCNCWFGRYFCSCTFGDYQTC.

Belongs to the neurotoxin 05 (agouti) family. In terms of processing, contains 5 disulfide bonds. In terms of tissue distribution, expressed by the venom gland.

The protein resides in the secreted. The polypeptide is U13-lycotoxin-Ls1c (Lycosa singoriensis (Wolf spider)).